Here is a 220-residue protein sequence, read N- to C-terminus: Ribonuclease HII (220 aa).

The 189-residue stretch at 32-220 (KHIAGIDEAG…FAPIKGRFDC (189 aa)) folds into the RNase H type-2 domain. A divalent metal cation-binding residues include Asp38, Glu39, and Asp130.

The protein belongs to the RNase HII family. The cofactor is Mn(2+). Mg(2+) serves as cofactor.

The protein resides in the cytoplasm. It carries out the reaction Endonucleolytic cleavage to 5'-phosphomonoester.. Functionally, endonuclease that specifically degrades the RNA of RNA-DNA hybrids. This chain is Ribonuclease HII, found in Brucella suis (strain ATCC 23445 / NCTC 10510).